Here is a 455-residue protein sequence, read N- to C-terminus: Golgi pH regulator (455 aa).

A run of 5 helical transmembrane segments spans residues 5–25 (IDSS…WLFF), 46–66 (VTFA…LGVL), 79–99 (LCVI…YFIV), 114–134 (CLLW…FPIL), and 150–170 (VGVI…VNCP). A glycan (N-linked (GlcNAc...) asparagine) is linked at asparagine 180. 4 helical membrane-spanning segments follow: residues 288–308 (FLGY…TINI), 343–363 (ISFI…LITL), 378–398 (VIVL…VLLI), and 425–445 (WFDV…YLAH).

The protein belongs to the Golgi pH regulator (TC 1.A.38) family. Homotrimer. Interacts with RABL3; the interaction stabilizes GPR89.

The protein localises to the golgi apparatus membrane. It carries out the reaction iodide(out) = iodide(in). The catalysed reaction is chloride(in) = chloride(out). The enzyme catalyses bromide(in) = bromide(out). It catalyses the reaction fluoride(in) = fluoride(out). Functionally, voltage-gated channel that enables the transfer of monoatomic anions such as iodide, chloride, bromide and fluoride which may function in counter-ion conductance and participates in Golgi acidification. Plays a role in lymphocyte development, probably by acting as a RABL3 effector in hematopoietic cells. The protein is Golgi pH regulator of Mus musculus (Mouse).